The chain runs to 545 residues: Afadin- and alpha-actinin-binding protein B (545 aa).

Coiled-coil stretches lie at residues R106–K287 and A358–L442. The disordered stretch occupies residues H497 to F545. 2 stretches are compositionally biased toward polar residues: residues I517 to E529 and S536 to F545.

This sequence belongs to the ADIP family. Interacts with WRAP73.

The protein resides in the cell junction. It localises to the adherens junction. It is found in the cytoplasm. Its subcellular location is the cytoskeleton. The protein localises to the microtubule organizing center. The protein resides in the centrosome. It localises to the centriolar satellite. Its function is as follows. Belongs to an adhesion system, which plays a role in the organization of homotypic, interneuronal and heterotypic cell-cell adherens junctions (AJs). Involved in cell movement. Acts as a centrosome maturation factor, probably by maintaining the integrity of the pericentriolar material and proper microtubule nucleation at mitotic spindle poles. The function seems to implicate at least in part WRAP73; the SSX2IP:WRAP73 complex is proposed to act as regulator of spindle anchoring at the mitotic centrosome. This is Afadin- and alpha-actinin-binding protein B (ssx2ip-b) from Xenopus laevis (African clawed frog).